The following is a 112-amino-acid chain: Serum amyloid A protein (112 aa).

A Pyrrolidone carboxylic acid modification is found at Gln1. A compositionally biased stretch (basic and acidic residues) spans Met75 to Ala86. The disordered stretch occupies residues Met75 to Tyr112.

The protein belongs to the SAA family. As to expression, expressed by the liver; secreted in plasma.

It is found in the secreted. Major acute phase reactant. Apolipoprotein of the HDL complex. The polypeptide is Serum amyloid A protein (SAA1) (Ovis aries (Sheep)).